Consider the following 173-residue polypeptide: Small ribosomal subunit protein uS9 (173 aa).

Residues 20 to 53 (SYTTESEVPVEGEYTSESVASRFGEPQPAAGLGR) are disordered.

It belongs to the universal ribosomal protein uS9 family.

The chain is Small ribosomal subunit protein uS9 from Streptomyces avermitilis (strain ATCC 31267 / DSM 46492 / JCM 5070 / NBRC 14893 / NCIMB 12804 / NRRL 8165 / MA-4680).